The chain runs to 79 residues: MKENIHPPYKQIKVTCSCGNTFMTGSTLDRELHLEICSACHPFYTGQQKMVDTAGRVERFRKKYAKRRAANASPEDEKK.

Residues Cys16, Cys18, Cys37, and Cys40 each contribute to the Zn(2+) site.

The protein belongs to the bacterial ribosomal protein bL31 family. Type A subfamily. In terms of assembly, part of the 50S ribosomal subunit. Zn(2+) serves as cofactor.

Functionally, binds the 23S rRNA. This chain is Large ribosomal subunit protein bL31, found in Coxiella burnetii (strain CbuG_Q212) (Coxiella burnetii (strain Q212)).